A 306-amino-acid chain; its full sequence is Pantothenate kinase (306 aa).

Residue Gly90–Ser97 participates in ATP binding.

Belongs to the prokaryotic pantothenate kinase family.

The protein localises to the cytoplasm. It carries out the reaction (R)-pantothenate + ATP = (R)-4'-phosphopantothenate + ADP + H(+). It functions in the pathway cofactor biosynthesis; coenzyme A biosynthesis; CoA from (R)-pantothenate: step 1/5. This Listeria monocytogenes serotype 4a (strain HCC23) protein is Pantothenate kinase.